The chain runs to 153 residues: Regulatory protein RecX (153 aa).

Belongs to the RecX family.

Its subcellular location is the cytoplasm. Functionally, modulates RecA activity. The polypeptide is Regulatory protein RecX (Pseudomonas aeruginosa (strain UCBPP-PA14)).